Reading from the N-terminus, the 470-residue chain is Serine/threonine-protein kinase PEPKR2 (470 aa).

Residues 107–355 (YVFGRNIGKG…ADEVLRHPWI (249 aa)) form the Protein kinase domain. ATP is bound by residues 113-121 (IGKGKFGSV) and K136. D224 functions as the Proton acceptor in the catalytic mechanism. Over residues 377–386 (GSSTCLQNRS) the composition is skewed to polar residues. Disordered stretches follow at residues 377–419 (GSST…EEED) and 441–464 (RSRV…TSTS). Over residues 387 to 403 (PTEKTDLNRADREKKIP) the composition is skewed to basic and acidic residues. A compositionally biased stretch (polar residues) spans 445–464 (CSPTNNPIEQQHSSNLTSTS).

It belongs to the protein kinase superfamily. Ser/Thr protein kinase family.

The enzyme catalyses L-seryl-[protein] + ATP = O-phospho-L-seryl-[protein] + ADP + H(+). It catalyses the reaction L-threonyl-[protein] + ATP = O-phospho-L-threonyl-[protein] + ADP + H(+). The polypeptide is Serine/threonine-protein kinase PEPKR2 (PEPKR2) (Arabidopsis thaliana (Mouse-ear cress)).